The following is a 773-amino-acid chain: MSRALPGFLFAGLSVAVVLPAQALVAHEQKAAGAEIRRTGFGVPHIVADDERGLGYGIGYAYAQDNLCLLANEVVTVNGERSRYFGPDKATLEQRNNMASDLLFKWLNTPQALADFWKAQPAEIRHLMQGYVAGYNRSLAEQTTQGLPQPCAAEWVRPISTDDLVRLTRRLLVEGGVGQFTEAFAGAKPPSTQKPLQVDSQQVQALQLAAARNERFALERGSNAVAVGRDLSANGRGMLLANPHFPWGGGMRFYQMHLTIPGKLDVMGAALPGLPLINIGFNQHLAWSHTVDTSKHFTLHRLQLDPKDSTRYLLDGKSVAMGKQQVSVEVKQADGTLKAVPRIIYSSKFGPVVQWPGKLDWDDKFAFSLRDANLKNDRVLQQWYAMDQADSLKAFQDSVHRIQGIPWVNTLAVDAKGQALYMNISVVPNVDAVKLARCSDPRIGTELIVLDGSRSECNWDVSPEAAQAGIYPSSRQPQLLRTDFVQHSNDSAWMVNPAAPLKDFSPLISQDGQPLGQRARFALDRLSSLEKTGKVSVENLQAMVMDNEVYHAGQVLPDLLKFCASELGDDAARLAPLCTALKAWDGRADLNSGIGFVYFQRIVTSMQAVASRWRVVFDPQNPVHTPSGLAIEYPEVATALRAAMLAAVDEVAKAGLSADTRWGDIQVSSISGKPIPIHGGPAGLGIYNAMQTVAGRDGKREVVSGTSYLQVVTFDEHGPKAQGLLAFSESSNPQSAHSRDQTEAFSKKHWSVLPFTEQQIKADPAYQVQVVKE.

A signal peptide spans 1–23; the sequence is MSRALPGFLFAGLSVAVVLPAQA. Positions 200–221 are cleaved as a propeptide — spacer peptide; that stretch reads SQQVQALQLAAARNERFALERG. Catalysis depends on Ser-222, which acts as the Nucleophile.

This sequence belongs to the peptidase S45 family. As to quaternary structure, heterodimer of an alpha subunit and a beta subunit processed from the same precursor.

Its subcellular location is the periplasm. The enzyme catalyses an N-acyl-L-homoserine lactone + H2O = L-homoserine lactone + a carboxylate. Its function is as follows. Catalyzes the deacylation of acyl-homoserine lactone (AHL or acyl-HSL), releasing homoserine lactone (HSL) and the corresponding fatty acid. Possesses a specificity for the degradation of long-chain acyl-HSLs (side chains of 11 to 14 carbons in length). The protein is Acyl-homoserine lactone acylase PvdQ (pvdQ) of Pseudomonas syringae pv. tomato (strain ATCC BAA-871 / DC3000).